We begin with the raw amino-acid sequence, 355 residues long: UDP-3-O-acylglucosamine N-acyltransferase (355 aa).

Residue His258 is the Proton acceptor of the active site.

It belongs to the transferase hexapeptide repeat family. LpxD subfamily. In terms of assembly, homotrimer.

The enzyme catalyses a UDP-3-O-[(3R)-3-hydroxyacyl]-alpha-D-glucosamine + a (3R)-hydroxyacyl-[ACP] = a UDP-2-N,3-O-bis[(3R)-3-hydroxyacyl]-alpha-D-glucosamine + holo-[ACP] + H(+). It participates in bacterial outer membrane biogenesis; LPS lipid A biosynthesis. In terms of biological role, catalyzes the N-acylation of UDP-3-O-acylglucosamine using 3-hydroxyacyl-ACP as the acyl donor. Is involved in the biosynthesis of lipid A, a phosphorylated glycolipid that anchors the lipopolysaccharide to the outer membrane of the cell. In Rhizobium rhizogenes (strain K84 / ATCC BAA-868) (Agrobacterium radiobacter), this protein is UDP-3-O-acylglucosamine N-acyltransferase.